The following is a 158-amino-acid chain: Transcription elongation factor GreA (158 aa).

Positions 14 to 76 (LDQLKDELTH…EIESILKNVK (63 aa)) form a coiled coil.

The protein belongs to the GreA/GreB family.

Necessary for efficient RNA polymerase transcription elongation past template-encoded arresting sites. The arresting sites in DNA have the property of trapping a certain fraction of elongating RNA polymerases that pass through, resulting in locked ternary complexes. Cleavage of the nascent transcript by cleavage factors such as GreA or GreB allows the resumption of elongation from the new 3'terminus. GreA releases sequences of 2 to 3 nucleotides. The protein is Transcription elongation factor GreA of Acholeplasma laidlawii (strain PG-8A).